The chain runs to 159 residues: Xanthine dehydrogenase iron-sulfur-binding subunit (159 aa).

The 2Fe-2S ferredoxin-type domain occupies 7–82; it reads ITIECTINGM…GKEIRTLEGE (76 aa). C44, C49, and C52 together coordinate [2Fe-2S] cluster.

Heterotrimer of XdhA, XdhB and XdhC. Requires [2Fe-2S] cluster as cofactor.

Its pathway is purine metabolism; hypoxanthine degradation; urate from hypoxanthine: step 1/2. In terms of biological role, iron-sulfur subunit of the xanthine dehydrogenase complex. This Escherichia coli O157:H7 protein is Xanthine dehydrogenase iron-sulfur-binding subunit (xdhC).